Reading from the N-terminus, the 467-residue chain is Megakaryocyte-associated tyrosine-protein kinase (467 aa).

The tract at residues 1–20 is disordered; that stretch reads MPTQRWAPGTQCMTKCENSR. The region spanning 7-69 is the SH3 domain; the sequence is APGTQCMTKC…AAAALRQREA (63 aa). An SH2 domain is found at 81 to 170; the sequence is WFHGKISGQE…AICTKLVKPK (90 aa). Residues 194–443 enclose the Protein kinase domain; the sequence is LTLGAQIGEG…IVEKLGRELR (250 aa). ATP is bound by residues 200-208 and K221; that span reads IGEGEFGAV. Catalysis depends on D311, which acts as the Proton acceptor. Residues 445-467 form a disordered region; sequence VGVAAPAGGQEAEGSAPTRSQDP.

This sequence belongs to the protein kinase superfamily. Tyr protein kinase family. CSK subfamily. In terms of assembly, interacts with KIT. In terms of tissue distribution, enriched in lymphoid tissues.

The protein resides in the cytoplasm. Its subcellular location is the membrane. It carries out the reaction L-tyrosyl-[protein] + ATP = O-phospho-L-tyrosyl-[protein] + ADP + H(+). Functionally, could play a significant role in the signal transduction of hematopoietic cells. May regulate tyrosine kinase activity of SRC-family members in brain. The protein is Megakaryocyte-associated tyrosine-protein kinase (Matk) of Rattus norvegicus (Rat).